A 158-amino-acid chain; its full sequence is Low molecular weight phosphotyrosine protein phosphatase (158 aa).

A2 bears the N-acetylalanine mark. C13 functions as the Nucleophile in the catalytic mechanism. R19 is an active-site residue. D130 serves as the catalytic Proton donor. 2 positions are modified to phosphotyrosine: Y132 and Y133.

This sequence belongs to the low molecular weight phosphotyrosine protein phosphatase family. Interacts with EPHA2; dephosphorylates EPHA2. Interacts with EPHB1. Interacts with the SH3 domain of SPTAN1. Phosphorylated by LCK. Phosphorylation at Tyr-132 increases its phosphatase activity.

Its subcellular location is the cytoplasm. The enzyme catalyses O-phospho-L-tyrosyl-[protein] + H2O = L-tyrosyl-[protein] + phosphate. It catalyses the reaction a phosphate monoester + H2O = an alcohol + phosphate. Inhibited by sulfhydryl reagents. Its function is as follows. Acts on tyrosine phosphorylated proteins, low-MW aryl phosphates and natural and synthetic acyl phosphates with differences in substrate specificity between isoform 1 and isoform 2. The chain is Low molecular weight phosphotyrosine protein phosphatase (ACP1) from Sus scrofa (Pig).